The chain runs to 729 residues: Sodium-dependent neutral amino acid transporter B(0)AT2 (729 aa).

Residues 1-69 (MPKNSKVVKR…ARPAWNSKLQ (69 aa)) are Cytoplasmic-facing. Phosphoserine is present on residues serine 25 and serine 55. 3 helical membrane-spanning segments follow: residues 70–90 (YILA…FPYL), 98–117 (AYLL…LFFL), and 142–162 (GIGF…NVII). The Extracellular segment spans residues 163-225 (GWSLFYFSQS…TSISESGGLN (63 aa)). N-linked (GlcNAc...) asparagine glycosylation is found at asparagine 187 and asparagine 213. 4 helical membrane passes run 226-244 (WKMT…LAMI), 253-270 (IMYF…CFLI), 306-323 (VFFA…FSSY), and 335-356 (VLVS…FAVL). Residues 357-452 (GFKANVINEK…FIAFTEAMTH (96 aa)) are Extracellular-facing. 2 N-linked (GlcNAc...) asparagine glycosylation sites follow: asparagine 383 and asparagine 394. A run of 5 helical transmembrane segments spans residues 453 to 472 (FPAS…NLGL), 496 to 514 (ILTV…IFVQ), 530 to 550 (TLPL…VYGI), 571 to 592 (YMWK…IVNM), and 620 to 642 (VICI…IRRC). At 643-729 (NLIDDSSGNL…DMPDMPESDL (87 aa)) the chain is on the cytoplasmic side. Phosphoserine is present on residues serine 687, serine 699, and serine 701.

This sequence belongs to the sodium:neurotransmitter symporter (SNF) (TC 2.A.22) family. SLC6A15 subfamily.

The protein localises to the membrane. It catalyses the reaction L-leucine(in) + Na(+)(in) = L-leucine(out) + Na(+)(out). The enzyme catalyses L-isoleucine(in) + Na(+)(in) = L-isoleucine(out) + Na(+)(out). It carries out the reaction L-methionine(in) + Na(+)(in) = L-methionine(out) + Na(+)(out). The catalysed reaction is L-proline(in) + Na(+)(in) = L-proline(out) + Na(+)(out). It catalyses the reaction L-alanine(in) + Na(+)(in) = L-alanine(out) + Na(+)(out). The enzyme catalyses L-asparagine(in) + Na(+)(in) = L-asparagine(out) + Na(+)(out). It carries out the reaction L-valine(in) + Na(+)(in) = L-valine(out) + Na(+)(out). The catalysed reaction is L-cysteine(in) + Na(+)(in) = L-cysteine(out) + Na(+)(out). It catalyses the reaction L-glutamine(in) + Na(+)(in) = L-glutamine(out) + Na(+)(out). The enzyme catalyses L-serine(in) + Na(+)(in) = L-serine(out) + Na(+)(out). It carries out the reaction L-threonine(in) + Na(+)(in) = L-threonine(out) + Na(+)(out). The catalysed reaction is L-pipecolate(in) + Na(+)(in) = L-pipecolate(out) + Na(+)(out). It catalyses the reaction L-phenylalanine(in) + Na(+)(in) = L-phenylalanine(out) + Na(+)(out). Functions as a sodium-dependent neutral amino acid transporter. Exhibits preference for the branched-chain amino acids, particularly leucine, valine and isoleucine and methionine. Can also transport low-affinity substrates such as alanine, phenylalanine, glutamine and pipecolic acid. Mediates the saturable, pH-sensitive and electrogenic cotransport of proline and sodium ions with a stoichiometry of 1:1. May have a role as transporter for neurotransmitter precursors into neurons. In contrast to other members of the neurotransmitter transporter family, does not appear to be chloride-dependent. In Bos taurus (Bovine), this protein is Sodium-dependent neutral amino acid transporter B(0)AT2 (SLC6A15).